A 569-amino-acid chain; its full sequence is 4-hydroxy-7-methoxy-3-oxo-3,4-dihydro-2H-1,4-benzoxazin-2-yl glucoside beta-D-glucosidase 1b, chloroplastic (569 aa).

The transit peptide at Met1–Ala50 directs the protein to the chloroplast. A beta-D-glucoside is bound by residues Gln92, His194, and Asn239–Glu240. Glu240 acts as the Proton donor in catalysis. Residues Cys259 and Cys265 are joined by a disulfide bond. Residues Tyr383, Glu456, Trp504, Glu511 to Trp512, and Phe520 each bind a beta-D-glucoside. Glu456 (nucleophile) is an active-site residue.

This sequence belongs to the glycosyl hydrolase 1 family. As to quaternary structure, homo- and heterohexamers. In terms of tissue distribution, expressed in young seedlings early after germination.

It is found in the plastid. The protein localises to the chloroplast. The enzyme catalyses Hydrolysis of terminal, non-reducing beta-D-glucosyl residues with release of beta-D-glucose.. The catalysed reaction is DIMBOA beta-D-glucoside + H2O = DIMBOA + D-glucose. It carries out the reaction DIBOA beta-D-glucoside + H2O = DIBOA + D-glucose. Functionally, acts in defense of young plant parts against pests via the production of hydroxamic acids from hydroxamic acid glucosides. Enzymatic activity is highly correlated with plant growth. The preferred substrate is DIMBOA-beta-D-glucoside. This is 4-hydroxy-7-methoxy-3-oxo-3,4-dihydro-2H-1,4-benzoxazin-2-yl glucoside beta-D-glucosidase 1b, chloroplastic (GLU1B) from Triticum aestivum (Wheat).